Here is a 356-residue protein sequence, read N- to C-terminus: Alanine racemase (356 aa).

The active-site Proton acceptor; specific for D-alanine is the K34. N6-(pyridoxal phosphate)lysine is present on K34. R129 lines the substrate pocket. Y253 functions as the Proton acceptor; specific for L-alanine in the catalytic mechanism. M301 contacts substrate.

The protein belongs to the alanine racemase family. Pyridoxal 5'-phosphate is required as a cofactor.

It catalyses the reaction L-alanine = D-alanine. The protein operates within amino-acid biosynthesis; D-alanine biosynthesis; D-alanine from L-alanine: step 1/1. In terms of biological role, catalyzes the interconversion of L-alanine and D-alanine. May also act on other amino acids. This is Alanine racemase (alr) from Nitrosococcus oceani (strain ATCC 19707 / BCRC 17464 / JCM 30415 / NCIMB 11848 / C-107).